The primary structure comprises 206 residues: MAKKPSIELPPFEIPAGYALIAGVDEVGRGPLVGDVVTAAVILDPNRPIMGLNDSKKLSEKKRLALFPEIQVKALAWAVGRCSPQEIDELNIFQATMVAMQRAVAGLRIQPDLVLIDGNKIPKLPMEAQAVVKGDLRVAQISAASIIAKVIRDQEMEALDKQYPQFGFAKHKGYPTAAHFAAIEQHGVIEQHRKSFGPVKRALGIE.

The 188-residue stretch at Ala-19–Glu-206 folds into the RNase H type-2 domain. A divalent metal cation contacts are provided by Asp-25, Glu-26, and Asp-117.

Belongs to the RNase HII family. It depends on Mn(2+) as a cofactor. Mg(2+) serves as cofactor.

The protein resides in the cytoplasm. The catalysed reaction is Endonucleolytic cleavage to 5'-phosphomonoester.. Endonuclease that specifically degrades the RNA of RNA-DNA hybrids. The sequence is that of Ribonuclease HII from Vibrio cholerae serotype O1 (strain M66-2).